A 353-amino-acid chain; its full sequence is Dihydroorotate dehydrogenase (quinone) (353 aa).

FMN is bound by residues 67 to 71 and Thr-91; that span reads AGFDK. Substrate is bound at residue Lys-71. Substrate is bound at residue 116–120; it reads NRMGF. Asn-144 and Asn-177 together coordinate FMN. Asn-177 serves as a coordination point for substrate. Ser-180 acts as the Nucleophile in catalysis. Asn-182 is a substrate binding site. 2 residues coordinate FMN: Lys-215 and Thr-243. Residue 244–245 coordinates substrate; the sequence is NT. FMN contacts are provided by residues Gly-264, Gly-293, and 314–315; that span reads YT.

This sequence belongs to the dihydroorotate dehydrogenase family. Type 2 subfamily. In terms of assembly, monomer. Requires FMN as cofactor.

It localises to the cell membrane. The enzyme catalyses (S)-dihydroorotate + a quinone = orotate + a quinol. It functions in the pathway pyrimidine metabolism; UMP biosynthesis via de novo pathway; orotate from (S)-dihydroorotate (quinone route): step 1/1. Its function is as follows. Catalyzes the conversion of dihydroorotate to orotate with quinone as electron acceptor. This Gloeobacter violaceus (strain ATCC 29082 / PCC 7421) protein is Dihydroorotate dehydrogenase (quinone).